A 638-amino-acid polypeptide reads, in one-letter code: Probable potassium transport system protein Kup (638 aa).

12 helical membrane passes run 25–45 (LAIA…LYSL), 65–85 (VISL…LLFV), 114–134 (AGAL…DAVI), 152–172 (PHLS…LFWI), 184–204 (FGPI…YHIV), 226–246 (LLQA…AEAL), 262–282 (AYGL…ALLI), 291–311 (PFFL…STVA), 352–372 (IYVP…VIGF), 382–402 (YGIA…VVMV), 410–430 (LLVG…FGAN), and 434–454 (VAQG…LLMT).

This sequence belongs to the HAK/KUP transporter (TC 2.A.72) family.

Its subcellular location is the cell inner membrane. It catalyses the reaction K(+)(in) + H(+)(in) = K(+)(out) + H(+)(out). Functionally, transport of potassium into the cell. Likely operates as a K(+):H(+) symporter. This chain is Probable potassium transport system protein Kup, found in Burkholderia lata (strain ATCC 17760 / DSM 23089 / LMG 22485 / NCIMB 9086 / R18194 / 383).